A 367-amino-acid polypeptide reads, in one-letter code: Glutamate 5-kinase (367 aa).

Residue lysine 17 coordinates ATP. Residues serine 57, aspartate 144, and asparagine 156 each coordinate substrate. ATP contacts are provided by residues 176–177 (SD) and 217–223 (TGGMTSK). Residues 279 to 357 (AGALTLDEGA…SELPGELRRP (79 aa)) form the PUA domain.

Belongs to the glutamate 5-kinase family.

The protein localises to the cytoplasm. The catalysed reaction is L-glutamate + ATP = L-glutamyl 5-phosphate + ADP. Its pathway is amino-acid biosynthesis; L-proline biosynthesis; L-glutamate 5-semialdehyde from L-glutamate: step 1/2. Functionally, catalyzes the transfer of a phosphate group to glutamate to form L-glutamate 5-phosphate. The sequence is that of Glutamate 5-kinase from Mycobacterium avium (strain 104).